The chain runs to 141 residues: Large ribosomal subunit protein bL17 (141 aa).

This sequence belongs to the bacterial ribosomal protein bL17 family. Part of the 50S ribosomal subunit. Contacts protein L32.

The polypeptide is Large ribosomal subunit protein bL17 (Sinorhizobium fredii (strain NBRC 101917 / NGR234)).